An 81-amino-acid chain; its full sequence is ATP synthase subunit c (81 aa).

The next 2 membrane-spanning stretches (helical) occupy residues 5-25 and 57-77; these read IAAGALIGGGLIMAGGAIGAG and VGLVEAAYFINLAFMALFVFA.

Belongs to the ATPase C chain family. F-type ATPases have 2 components, F(1) - the catalytic core - and F(0) - the membrane proton channel. F(1) has five subunits: alpha(3), beta(3), gamma(1), delta(1), epsilon(1). F(0) has three main subunits: a(1), b(2) and c(10-14). The alpha and beta chains form an alternating ring which encloses part of the gamma chain. F(1) is attached to F(0) by a central stalk formed by the gamma and epsilon chains, while a peripheral stalk is formed by the delta and b chains.

Its subcellular location is the cell membrane. F(1)F(0) ATP synthase produces ATP from ADP in the presence of a proton or sodium gradient. F-type ATPases consist of two structural domains, F(1) containing the extramembraneous catalytic core and F(0) containing the membrane proton channel, linked together by a central stalk and a peripheral stalk. During catalysis, ATP synthesis in the catalytic domain of F(1) is coupled via a rotary mechanism of the central stalk subunits to proton translocation. In terms of biological role, key component of the F(0) channel; it plays a direct role in translocation across the membrane. A homomeric c-ring of between 10-14 subunits forms the central stalk rotor element with the F(1) delta and epsilon subunits. This is ATP synthase subunit c from Mycobacterium marinum (strain ATCC BAA-535 / M).